We begin with the raw amino-acid sequence, 290 residues long: RIO-type serine/threonine-protein kinase Rio1 (290 aa).

The disordered stretch occupies residues 1–22 (MTDEFGMVEPQEGEAFGDEWEE). Over residues 11-22 (QEGEAFGDEWEE) the composition is skewed to acidic residues. The 212-residue stretch at 79 to 290 (DAFGGPISTG…DEGEDGDGDE (212 aa)) folds into the Protein kinase domain. Residues 85–93 (ISTGKEANV), Lys107, Glu175, and Val177 each bind ATP. The active-site Proton acceptor is Asp218. Mg(2+)-binding residues include Asn223 and Asp235. Catalysis depends on Asp235, which acts as the 4-aspartylphosphate intermediate.

The protein belongs to the protein kinase superfamily. RIO-type Ser/Thr kinase family. The cofactor is Mg(2+). Requires Mn(2+) as cofactor. In terms of processing, autophosphorylated.

It catalyses the reaction L-seryl-[protein] + ATP = O-phospho-L-seryl-[protein] + ADP + H(+). It carries out the reaction L-threonyl-[protein] + ATP = O-phospho-L-threonyl-[protein] + ADP + H(+). The catalysed reaction is ATP + H2O = ADP + phosphate + H(+). In terms of biological role, serine/threonine-protein kinase that is able to autophosphorylate as well as to phosphorylate proteasome subunit alpha 1 (PsmA1) in vitro. Despite the protein kinase domain is proposed to act predominantly as an ATPase. In Haloferax volcanii (strain ATCC 29605 / DSM 3757 / JCM 8879 / NBRC 14742 / NCIMB 2012 / VKM B-1768 / DS2) (Halobacterium volcanii), this protein is RIO-type serine/threonine-protein kinase Rio1 (rio1).